The primary structure comprises 95 residues: uncharacterized protein (95 aa).

Residues 65 to 95 (DANDYDTTTTEEEDSSTTTTTDNETNSDDDI) are disordered.

This is an uncharacterized protein from Lymantria dispar multicapsid nuclear polyhedrosis virus (LdMNPV).